Consider the following 538-residue polypeptide: Chaperonin GroEL 1 (538 aa).

ATP contacts are provided by residues 30–33 (TLGP), lysine 51, 87–91 (DGTTT), glycine 415, 479–481 (NAA), and aspartate 495.

The protein belongs to the chaperonin (HSP60) family. In terms of assembly, forms a cylinder of 14 subunits composed of two heptameric rings stacked back-to-back. Interacts with the co-chaperonin GroES.

Its subcellular location is the cytoplasm. It carries out the reaction ATP + H2O + a folded polypeptide = ADP + phosphate + an unfolded polypeptide.. Its function is as follows. Together with its co-chaperonin GroES, plays an essential role in assisting protein folding. The GroEL-GroES system forms a nano-cage that allows encapsulation of the non-native substrate proteins and provides a physical environment optimized to promote and accelerate protein folding. This Chromobacterium violaceum (strain ATCC 12472 / DSM 30191 / JCM 1249 / CCUG 213 / NBRC 12614 / NCIMB 9131 / NCTC 9757 / MK) protein is Chaperonin GroEL 1.